A 354-amino-acid polypeptide reads, in one-letter code: GTPase Obg (354 aa).

An Obg domain is found at 1 to 159; sequence MKFLDQCKIY…RWIWLRLKLI (159 aa). In terms of domain architecture, OBG-type G spans 160 to 328; sequence ADVGLVGLPN…LLRAAYKQVR (169 aa). GTP-binding positions include 166-173, 191-195, 213-216, 280-283, and 309-311; these read GLPNAGKS, FTTLT, DIPG, NKID, and SGV. Serine 173 and threonine 193 together coordinate Mg(2+). Positions 335–345 are enriched in acidic residues; it reads EEEIDDDEDHV. A disordered region spans residues 335 to 354; that stretch reads EEEIDDDEDHVDETPGGWTP.

The protein belongs to the TRAFAC class OBG-HflX-like GTPase superfamily. OBG GTPase family. As to quaternary structure, monomer. Mg(2+) serves as cofactor.

The protein localises to the cytoplasm. Its function is as follows. An essential GTPase which binds GTP, GDP and possibly (p)ppGpp with moderate affinity, with high nucleotide exchange rates and a fairly low GTP hydrolysis rate. Plays a role in control of the cell cycle, stress response, ribosome biogenesis and in those bacteria that undergo differentiation, in morphogenesis control. This Caulobacter vibrioides (strain ATCC 19089 / CIP 103742 / CB 15) (Caulobacter crescentus) protein is GTPase Obg.